The sequence spans 832 residues: Cadherin-17 (832 aa).

The signal sequence occupies residues 1–22 (MILQAHLHSLCLLMLYLATGYG). The Extracellular segment spans residues 23–787 (QEGKFSGPLK…HQTGIPTVGM (765 aa)). Cadherin domains lie at 30–128 (PLKP…TFLQ), 129–244 (SKYE…APKP), 245–340 (VEMV…PPTC), 341–449 (PSPV…IPIF), 450–566 (EKSD…APQF), 567–667 (SQHV…PPRL), and 668–777 (AKDY…RPAG). 8 N-linked (GlcNAc...) asparagine glycosylation sites follow: asparagine 149, asparagine 184, asparagine 250, asparagine 419, asparagine 456, asparagine 546, asparagine 587, and asparagine 722. The chain crosses the membrane as a helical span at residues 788–808 (AVGILLTTLLVIGIILAVVFI). Topologically, residues 809–832 (RIKKDKGKDNVESAQASEVKPLRS) are cytoplasmic.

As to expression, expressed in the gastrointestinal tract and pancreatic duct. Not detected in kidney, lung, liver, brain, adrenal gland and skin.

Its subcellular location is the cell membrane. Functionally, cadherins are calcium-dependent cell adhesion proteins. They preferentially interact with themselves in a homophilic manner in connecting cells; cadherins may thus contribute to the sorting of heterogeneous cell types. LI-cadherin may have a role in the morphological organization of liver and intestine. Involved in intestinal peptide transport. This is Cadherin-17 (CDH17) from Homo sapiens (Human).